A 217-amino-acid chain; its full sequence is Large ribosomal subunit protein uL3 (217 aa).

Positions Gly-127–Ala-162 are disordered. The span at Ala-142 to Gly-153 shows a compositional bias: low complexity.

This sequence belongs to the universal ribosomal protein uL3 family. As to quaternary structure, part of the 50S ribosomal subunit. Forms a cluster with proteins L14 and L19.

One of the primary rRNA binding proteins, it binds directly near the 3'-end of the 23S rRNA, where it nucleates assembly of the 50S subunit. This chain is Large ribosomal subunit protein uL3, found in Prochlorococcus marinus (strain AS9601).